The chain runs to 161 residues: Ribosome maturation factor RimP (161 aa).

This sequence belongs to the RimP family.

It localises to the cytoplasm. In terms of biological role, required for maturation of 30S ribosomal subunits. This is Ribosome maturation factor RimP from Desulfosudis oleivorans (strain DSM 6200 / JCM 39069 / Hxd3) (Desulfococcus oleovorans).